A 200-amino-acid polypeptide reads, in one-letter code: Large ribosomal subunit protein uL4 (200 aa).

The tract at residues T42–G65 is disordered.

This sequence belongs to the universal ribosomal protein uL4 family. As to quaternary structure, part of the 50S ribosomal subunit.

Functionally, one of the primary rRNA binding proteins, this protein initially binds near the 5'-end of the 23S rRNA. It is important during the early stages of 50S assembly. It makes multiple contacts with different domains of the 23S rRNA in the assembled 50S subunit and ribosome. Forms part of the polypeptide exit tunnel. This is Large ribosomal subunit protein uL4 from Vibrio cholerae serotype O1 (strain ATCC 39541 / Classical Ogawa 395 / O395).